We begin with the raw amino-acid sequence, 398 residues long: MAPRGLLVLLLLALVGPCAALIRIPLTKFTSTRRMLTEVGSEIPDMNAITQFLKFKLGFADLAEPTPEILKNYMDAQYYGEIGIGTPPQKFTVVFDTGSSNLWVPSVHCHLLDIACLLHHKYDASKSSTYVENGTEFAIHYGTGSLSGFLSQDTVTLGNLKIKNQIFGEAVKQPGITFIAAKFDGILGMAFPRISVDKVTPFFDNVMQQKLIEKNIFSFYLNRDPTAQPGGELLLGGTDPKYYSGDFSWVNVTRKAYWQVHMDSVDVANGLTLCKGGCEAIVDTGTSLITGPTKEVKELQTAIGAKPLIKGQYVISCDKISSLPVVTLMLGGKPYQLTGEQYVFKVSAQGETICLSGFSGLDVPPPGGPLWILGDVFIGPYYTVFDRDNDSVGFAKCV.

The N-terminal stretch at 1-20 (MAPRGLLVLLLLALVGPCAA) is a signal peptide. Residues 21 to 63 (LIRIPLTKFTSTRRMLTEVGSEIPDMNAITQFLKFKLGFADLA) constitute a propeptide, activation peptide. Residues 78–395 (YYGEIGIGTP…DRDNDSVGFA (318 aa)) form the Peptidase A1 domain. Asp-96 is a catalytic residue. A disulfide bridge connects residues Cys-109 and Cys-116. 2 N-linked (GlcNAc...) asparagine glycosylation sites follow: Asn-133 and Asn-251. Cys-274 and Cys-278 are oxidised to a cystine. The active site involves Asp-283. Cys-317 and Cys-354 are disulfide-bonded.

It belongs to the peptidase A1 family. Consists of a light chain and a heavy chain. As to expression, oocytic yolk, preovulatory follicles, liver.

Its subcellular location is the lysosome. It catalyses the reaction Specificity similar to, but narrower than, that of pepsin A. Does not cleave the 4-Gln-|-His-5 bond in B chain of insulin.. In terms of biological role, acid protease active in intracellular protein breakdown. In chicken it is a key enzyme for yolk formation as it is capable of catalyzing intra oocytic break down of protein components of both vitellogenin and VLDL. In Gallus gallus (Chicken), this protein is Cathepsin D (CTSD).